The primary structure comprises 87 residues: Small ribosomal subunit protein eS21 (87 aa).

N-acetylmethionine is present on Met1.

The protein belongs to the eukaryotic ribosomal protein eS21 family. Component of the small ribosomal subunit (SSU). Mature yeast ribosomes consist of a small (40S) and a large (60S) subunit. The 40S small subunit contains 1 molecule of ribosomal RNA (18S rRNA) and at least 33 different proteins. The large 60S subunit contains 3 rRNA molecules (25S, 5.8S and 5S rRNA) and at least 46 different proteins. Interacts with uS2A and uS2B, strongest interaction is with uS2B.

The protein resides in the cytoplasm. It is found in the nucleus. Component of the ribosome, a large ribonucleoprotein complex responsible for the synthesis of proteins in the cell. The small ribosomal subunit (SSU) binds messenger RNAs (mRNAs) and translates the encoded message by selecting cognate aminoacyl-transfer RNA (tRNA) molecules. The large subunit (LSU) contains the ribosomal catalytic site termed the peptidyl transferase center (PTC), which catalyzes the formation of peptide bonds, thereby polymerizing the amino acids delivered by tRNAs into a polypeptide chain. The nascent polypeptides leave the ribosome through a tunnel in the LSU and interact with protein factors that function in enzymatic processing, targeting, and the membrane insertion of nascent chains at the exit of the ribosomal tunnel. eS21 is required for the processing of the 20S rRNA-precursor to mature 18S rRNA in a late step of the maturation of 40S ribosomal subunits. Has a physiological role leading to 18S rRNA stability. In Schizosaccharomyces pombe (strain 972 / ATCC 24843) (Fission yeast), this protein is Small ribosomal subunit protein eS21 (rps21).